Here is a 137-residue protein sequence, read N- to C-terminus: Phosphoribosyl-AMP cyclohydrolase (137 aa).

Position 84 (aspartate 84) interacts with Mg(2+). Residue cysteine 85 participates in Zn(2+) binding. Positions 86 and 88 each coordinate Mg(2+). Zn(2+) contacts are provided by cysteine 101 and cysteine 108.

This sequence belongs to the PRA-CH family. In terms of assembly, homodimer. Mg(2+) is required as a cofactor. The cofactor is Zn(2+).

The protein resides in the cytoplasm. It carries out the reaction 1-(5-phospho-beta-D-ribosyl)-5'-AMP + H2O = 1-(5-phospho-beta-D-ribosyl)-5-[(5-phospho-beta-D-ribosylamino)methylideneamino]imidazole-4-carboxamide. It participates in amino-acid biosynthesis; L-histidine biosynthesis; L-histidine from 5-phospho-alpha-D-ribose 1-diphosphate: step 3/9. Catalyzes the hydrolysis of the adenine ring of phosphoribosyl-AMP. The polypeptide is Phosphoribosyl-AMP cyclohydrolase (Prosthecochloris aestuarii (strain DSM 271 / SK 413)).